A 1217-amino-acid chain; its full sequence is Inactive disease resistance protein RPS4 (1217 aa).

Residues 14 to 175 form the TIR domain; the sequence is PQHQVFINFR…EIVKAVKTAL (162 aa). E88 is an active-site residue. In terms of domain architecture, NB-ARC spans 211-472; that stretch reads EQRLKDLEEK…FRSQDKDYVE (262 aa). 11 LRR repeats span residues 260–285, 436–459, 614–636, 637–659, 682–706, 708–728, 729–749, 750–774, 796–818, 819–842, and 861–887; these read HALI…LLGE, PNIV…AFLD, LKEV…DFNP, INLV…DKDT, AEKL…MKKM, MLAF…EMNL, ISLK…PLIS, DNIE…KLQR, LKAL…EIDI, SFLN…SVQY, and LSQL…NLQC. Positions 1162-1195 are disordered; it reads TEGVDGRVKKKKKTRMDNGRPKKKQRSGRDDNQT. The Nuclear localization signal signature appears at 1170 to 1177; the sequence is KKKKKTRM.

Interacts with EDS1.

The protein resides in the nucleus. The enzyme catalyses NAD(+) + H2O = ADP-D-ribose + nicotinamide + H(+). The chain is Inactive disease resistance protein RPS4 (RPS4) from Arabidopsis thaliana (Mouse-ear cress).